We begin with the raw amino-acid sequence, 89 residues long: Large ribosomal subunit protein eL34 (89 aa).

The tract at residues 1–29 is disordered; sequence MSAPRFRNGTFKRTLKRVPGGRKVEHYKK. Positions 13–29 are enriched in basic residues; sequence RTLKRVPGGRKVEHYKK.

Belongs to the eukaryotic ribosomal protein eL34 family.

The polypeptide is Large ribosomal subunit protein eL34 (Methanosphaera stadtmanae (strain ATCC 43021 / DSM 3091 / JCM 11832 / MCB-3)).